The chain runs to 178 residues: Probable chorismate pyruvate-lyase (178 aa).

Substrate contacts are provided by Arg72, Leu110, and Glu169.

Belongs to the UbiC family.

The protein resides in the cytoplasm. It catalyses the reaction chorismate = 4-hydroxybenzoate + pyruvate. Its pathway is cofactor biosynthesis; ubiquinone biosynthesis. Removes the pyruvyl group from chorismate, with concomitant aromatization of the ring, to provide 4-hydroxybenzoate (4HB) for the ubiquinone pathway. This Nitrosomonas europaea (strain ATCC 19718 / CIP 103999 / KCTC 2705 / NBRC 14298) protein is Probable chorismate pyruvate-lyase.